The sequence spans 202 residues: Small ribosomal subunit protein uS5 (202 aa).

Positions 1 to 13 (MPGQQRRGGGSGG) are enriched in gly residues. The disordered stretch occupies residues 1 to 31 (MPGQQRRGGGSGGSDRRERRDRSGGGPAQEK). The segment covering 14–23 (SDRRERRDRS) has biased composition (basic and acidic residues). The S5 DRBM domain maps to 34–97 (YVERVVAINR…EEAKKHFFKV (64 aa)).

Belongs to the universal ribosomal protein uS5 family. Part of the 30S ribosomal subunit. Contacts proteins S4 and S8.

Its function is as follows. With S4 and S12 plays an important role in translational accuracy. Functionally, located at the back of the 30S subunit body where it stabilizes the conformation of the head with respect to the body. This Frankia alni (strain DSM 45986 / CECT 9034 / ACN14a) protein is Small ribosomal subunit protein uS5.